A 225-amino-acid chain; its full sequence is Putative ankyrin repeat protein RBE_1025 (225 aa).

ANK repeat units follow at residues 6-35 (LSKD…AINP), 41-71 (NGKT…NVNI), 75-120 (TGFT…DVNI), and 124-153 (KGNT…SPFI).

This is Putative ankyrin repeat protein RBE_1025 from Rickettsia bellii (strain RML369-C).